Reading from the N-terminus, the 239-residue chain is Pyridoxine 5'-phosphate synthase (239 aa).

Asparagine 7 serves as a coordination point for 3-amino-2-oxopropyl phosphate. 9 to 10 (DH) is a 1-deoxy-D-xylulose 5-phosphate binding site. Residue arginine 18 participates in 3-amino-2-oxopropyl phosphate binding. Residue histidine 43 is the Proton acceptor of the active site. Residues arginine 45 and histidine 50 each contribute to the 1-deoxy-D-xylulose 5-phosphate site. Catalysis depends on glutamate 70, which acts as the Proton acceptor. Threonine 100 contacts 1-deoxy-D-xylulose 5-phosphate. Histidine 191 serves as the catalytic Proton donor. Residues glycine 192 and 213 to 214 (GH) each bind 3-amino-2-oxopropyl phosphate.

It belongs to the PNP synthase family. In terms of assembly, homooctamer; tetramer of dimers.

The protein localises to the cytoplasm. It carries out the reaction 3-amino-2-oxopropyl phosphate + 1-deoxy-D-xylulose 5-phosphate = pyridoxine 5'-phosphate + phosphate + 2 H2O + H(+). The protein operates within cofactor biosynthesis; pyridoxine 5'-phosphate biosynthesis; pyridoxine 5'-phosphate from D-erythrose 4-phosphate: step 5/5. Its function is as follows. Catalyzes the complicated ring closure reaction between the two acyclic compounds 1-deoxy-D-xylulose-5-phosphate (DXP) and 3-amino-2-oxopropyl phosphate (1-amino-acetone-3-phosphate or AAP) to form pyridoxine 5'-phosphate (PNP) and inorganic phosphate. This Geobacter metallireducens (strain ATCC 53774 / DSM 7210 / GS-15) protein is Pyridoxine 5'-phosphate synthase.